Here is a 735-residue protein sequence, read N- to C-terminus: Glycogen [starch] synthase, muscle (735 aa).

At Ser8 the chain carries Phosphoserine; by AMPK and PKA. The residue at position 11 (Ser11) is a Phosphoserine. Lys39 contributes to the UDP binding site. UDP-alpha-D-glucose-binding residues include His205 and Arg211. The alpha-D-glucose 6-phosphate site is built by His291, Glu292, Gln294, His297, and Lys301. Arg331 contributes to the UDP binding site. Position 331 (Arg331) interacts with UDP-alpha-D-glucose. At Ser412 the chain carries Phosphoserine. Residue His501 coordinates alpha-D-glucose 6-phosphate. Positions 510, 512, and 513 each coordinate UDP-alpha-D-glucose. A UDP-binding site is contributed by Thr515. Alpha-D-glucose 6-phosphate-binding residues include Arg582 and Arg586. The disordered stretch occupies residues 629-735 (DATQGYRYPR…PASSLGEERN (107 aa)). Residue Ser641 is modified to Phosphoserine; by DYRK2, GSK3-alpha, GSK3-beta and PASK. Residues Ser645 and Ser649 each carry the phosphoserine; by GSK3-alpha and GSK3-beta modification. A Phosphoserine modification is found at Ser652. Residue Ser653 is modified to Phosphoserine; by GSK3-alpha and GSK3-beta. A Phosphoserine; by CK2 modification is found at Ser657. Residues 658–681 (EDEEEPRDGLPEEDGERYDEDEEA) show a composition bias toward acidic residues. Residues 682 to 695 (AKDRRNIRAPEWPR) show a composition bias toward basic and acidic residues. Ser698 is subject to Phosphoserine. The span at 698 to 735 (SCTSSSGGSKRSNSVDTSSLSTPSEPLSPASSLGEERN) shows a compositional bias: low complexity. Residue Thr700 is modified to Phosphothreonine. Phosphoserine is present on residues Ser709 and Ser711. Thr719 bears the Phosphothreonine mark. Residues Ser725 and Ser729 each carry the phosphoserine modification.

This sequence belongs to the glycosyltransferase 3 family. In terms of assembly, part of the GYS1-GYG1 complex, a heterooctamer composed of a tetramer of GYS1 and 2 dimers of GYG1, where each GYS1 protomer binds to one GYG1 subunit (via GYG1 C-terminus); the GYS1 tetramer may dissociate from GYG1 dimers to continue glycogen polymerization on its own. Post-translationally, phosphorylation at Ser-8 is required for modification of Ser-11 by casein kinase I. Phosphorylated at Ser-641 by PASK, leading to inactivation; phosphorylation by PASK is inhibited by glycogen. Dephosphorylation at Ser-641 and Ser-645 by PP1 activates the enzyme. Phosphorylation at Ser-8 by AMPK inactivates the enzyme activity. Phosphorylated at Ser-641 by DYRK2, leading to inactivation. Primed phosphorylation at Ser-657 (site 5) by CSNK2A1 and CSNK2A2 is required for inhibitory phosphorylation at Ser-641 (site 3a), Ser-645 (site 3b), Ser-649 (site 3c) and Ser-653 (site 4) by GSK3A and GSK3B.

It carries out the reaction [(1-&gt;4)-alpha-D-glucosyl](n) + UDP-alpha-D-glucose = [(1-&gt;4)-alpha-D-glucosyl](n+1) + UDP + H(+). Its pathway is glycan biosynthesis; glycogen biosynthesis. Allosteric activation by glucose-6-phosphate. Phosphorylation reduces the activity towards UDP-glucose. When in the non-phosphorylated state, glycogen synthase does not require glucose-6-phosphate as an allosteric activator; when phosphorylated it does. Its function is as follows. Glycogen synthase participates in the glycogen biosynthetic process along with glycogenin and glycogen branching enzyme. Extends the primer composed of a few glucose units formed by glycogenin by adding new glucose units to it. In this context, glycogen synthase transfers the glycosyl residue from UDP-Glc to the non-reducing end of alpha-1,4-glucan. In Oryctolagus cuniculus (Rabbit), this protein is Glycogen [starch] synthase, muscle.